A 194-amino-acid polypeptide reads, in one-letter code: Adenylate kinase isoenzyme 1 (194 aa).

N-acetylmethionine is present on Met1. Residue 18 to 23 (GSGKGT) participates in ATP binding. Ser38 bears the Phosphoserine mark. The tract at residues 38 to 67 (STGDLLRSEVSSGSARGKKLSEIMEKGQLV) is NMP. AMP contacts are provided by residues Thr39, Arg44, 65-67 (QLV), 94-97 (GYPR), and Gln101. The tract at residues 131-141 (KRGETSGRVDD) is LID. Arg132 is a binding site for ATP. AMP contacts are provided by Arg138 and Arg149. Gly177 contacts ATP.

The protein belongs to the adenylate kinase family. AK1 subfamily. As to quaternary structure, monomer. Mg(2+) serves as cofactor.

Its subcellular location is the cytoplasm. It catalyses the reaction a ribonucleoside 5'-phosphate + ATP = a ribonucleoside 5'-diphosphate + ADP. It carries out the reaction AMP + ATP = 2 ADP. The enzyme catalyses dAMP + ATP = dADP + ADP. The catalysed reaction is dATP + AMP = dADP + ADP. It catalyses the reaction dAMP + dATP = 2 dADP. It carries out the reaction a 2'-deoxyribonucleoside 5'-diphosphate + ATP = a 2'-deoxyribonucleoside 5'-triphosphate + ADP. The enzyme catalyses a ribonucleoside 5'-diphosphate + ATP = a ribonucleoside 5'-triphosphate + ADP. The catalysed reaction is CDP + GTP = CTP + GDP. It catalyses the reaction GDP + ATP = GTP + ADP. It carries out the reaction UDP + ATP = UTP + ADP. The enzyme catalyses GTP + UDP = UTP + GDP. The catalysed reaction is dTDP + GTP = dTTP + GDP. It catalyses the reaction dCDP + GTP = dCTP + GDP. It carries out the reaction dGDP + ATP = dGTP + ADP. The enzyme catalyses dADP + GTP = dATP + GDP. The catalysed reaction is thiamine diphosphate + ADP = thiamine triphosphate + AMP. Its function is as follows. Catalyzes the reversible transfer of the terminal phosphate group between ATP and AMP. Also displays broad nucleoside diphosphate kinase activity. Plays an important role in cellular energy homeostasis and in adenine nucleotide metabolism. Also catalyzes at a very low rate the synthesis of thiamine triphosphate (ThTP) from thiamine diphosphate (ThDP) and ADP. The protein is Adenylate kinase isoenzyme 1 of Homo sapiens (Human).